Reading from the N-terminus, the 536-residue chain is MATRRQPLIPGWLIPGLCAAALMITVSLAAFLALWLNAPSGAWSTIWRDSYLWHVVRFSFWQAFLSAVLSVVPAVFLARALYRRRFPGRLALLRLCAMTLILPVLVAVFGILSVYGRQGWLASLWQMLGLQWTFSPYGLQGILLAHVFFNLPMASRLLLQSLESIPGEQRQLAAQLGMRGWHFFRFVEWPWLRRQIPPVAALIFMLCFASFATVLSLGGGPQATTIELAIFQALSYDYDPARAAMLALIQMVCCLALVLLSQRLSKAIAPGMTLTQGWRDPDDRLHSRLTDALLIVLALLLLLPPLVAVVVDGVNRSLPEVLAQPILWQAVWTSLRIALAAGVLCVVLTMMLLWSSRELRQRQQLFAGQTLELSGMLILAMPGIVLATGFFLLLNNSVGLPESADGIVIFTNALMAIPYALKVLENPMRDITARYGMLCQSLGIEGWSRLKIVELRALKRPLAQALAFACVLSIGDFGVVALFGNDNFRTLPFYLYQQIGSYRSQDGAVTALILLLLCFTLFTLIEKLPGRHAKTD.

12 helical membrane-spanning segments follow: residues G16–L36, F58–A78, L95–Y115, F134–A154, V199–G219, P240–L260, D291–V311, S334–W354, L373–L393, A404–L424, A463–F483, and D506–E526. An ABC transmembrane type-1 1 domain is found at V56–S261. Residues V331–I525 form the ABC transmembrane type-1 2 domain.

Belongs to the binding-protein-dependent transport system permease family. The complex is composed of two ATP-binding proteins (ThiQ), two transmembrane proteins (ThiP) and a solute-binding protein (ThiB).

The protein localises to the cell inner membrane. Part of the ABC transporter complex ThiBPQ involved in thiamine import. Probably responsible for the translocation of the substrate across the membrane. Is also involved in thiamine pyrophosphate transport. The protein is Thiamine transport system permease protein ThiP of Salmonella typhimurium (strain LT2 / SGSC1412 / ATCC 700720).